Reading from the N-terminus, the 440-residue chain is Adenylosuccinate synthetase (440 aa).

Residues 11–17 and 39–41 contribute to the GTP site; these read GDEGKGG and GHT. The Proton acceptor role is filled by aspartate 12. Mg(2+)-binding residues include aspartate 12 and glycine 39. IMP contacts are provided by residues 12 to 15, 37 to 40, threonine 127, arginine 141, glutamine 230, threonine 245, and arginine 311; these read DEGK and NAGH. The active-site Proton donor is histidine 40. 307-313 is a substrate binding site; it reads TVTGRPR. Residues arginine 313, 339-341, and 424-426 contribute to the GTP site; these read HLD and GVG.

The protein belongs to the adenylosuccinate synthetase family. Homodimer. Mg(2+) is required as a cofactor.

It is found in the cytoplasm. The catalysed reaction is IMP + L-aspartate + GTP = N(6)-(1,2-dicarboxyethyl)-AMP + GDP + phosphate + 2 H(+). It participates in purine metabolism; AMP biosynthesis via de novo pathway; AMP from IMP: step 1/2. Its function is as follows. Plays an important role in the de novo pathway of purine nucleotide biosynthesis. Catalyzes the first committed step in the biosynthesis of AMP from IMP. This is Adenylosuccinate synthetase from Halobacterium salinarum (strain ATCC 29341 / DSM 671 / R1).